The chain runs to 513 residues: Bifunctional purine biosynthesis protein PurH (513 aa).

In terms of domain architecture, MGS-like spans 1-145; it reads MNKRAIISVY…KNFKYTTVIV (145 aa).

Belongs to the PurH family.

The catalysed reaction is (6R)-10-formyltetrahydrofolate + 5-amino-1-(5-phospho-beta-D-ribosyl)imidazole-4-carboxamide = 5-formamido-1-(5-phospho-D-ribosyl)imidazole-4-carboxamide + (6S)-5,6,7,8-tetrahydrofolate. The enzyme catalyses IMP + H2O = 5-formamido-1-(5-phospho-D-ribosyl)imidazole-4-carboxamide. Its pathway is purine metabolism; IMP biosynthesis via de novo pathway; 5-formamido-1-(5-phospho-D-ribosyl)imidazole-4-carboxamide from 5-amino-1-(5-phospho-D-ribosyl)imidazole-4-carboxamide (10-formyl THF route): step 1/1. The protein operates within purine metabolism; IMP biosynthesis via de novo pathway; IMP from 5-formamido-1-(5-phospho-D-ribosyl)imidazole-4-carboxamide: step 1/1. The chain is Bifunctional purine biosynthesis protein PurH from Caldicellulosiruptor bescii (strain ATCC BAA-1888 / DSM 6725 / KCTC 15123 / Z-1320) (Anaerocellum thermophilum).